We begin with the raw amino-acid sequence, 123 residues long: Small ribosomal subunit protein uS12 (123 aa).

The disordered stretch occupies residues 1–21 (MPTIEQLVRKGRQAKPKKSKT). The span at 9–20 (RKGRQAKPKKSK) shows a compositional bias: basic residues. The residue at position 89 (Asp89) is a 3-methylthioaspartic acid.

The protein belongs to the universal ribosomal protein uS12 family. In terms of assembly, part of the 30S ribosomal subunit. Contacts proteins S8 and S17. May interact with IF1 in the 30S initiation complex.

With S4 and S5 plays an important role in translational accuracy. In terms of biological role, interacts with and stabilizes bases of the 16S rRNA that are involved in tRNA selection in the A site and with the mRNA backbone. Located at the interface of the 30S and 50S subunits, it traverses the body of the 30S subunit contacting proteins on the other side and probably holding the rRNA structure together. The combined cluster of proteins S8, S12 and S17 appears to hold together the shoulder and platform of the 30S subunit. The chain is Small ribosomal subunit protein uS12 from Bifidobacterium adolescentis (strain ATCC 15703 / DSM 20083 / NCTC 11814 / E194a).